Here is a 156-residue protein sequence, read N- to C-terminus: ATP synthase subunit b (156 aa).

A helical membrane pass occupies residues 7–29 (LFGQTVAFILFVWFCMKFVWPPL).

It belongs to the ATPase B chain family. In terms of assembly, F-type ATPases have 2 components, F(1) - the catalytic core - and F(0) - the membrane proton channel. F(1) has five subunits: alpha(3), beta(3), gamma(1), delta(1), epsilon(1). F(0) has three main subunits: a(1), b(2) and c(10-14). The alpha and beta chains form an alternating ring which encloses part of the gamma chain. F(1) is attached to F(0) by a central stalk formed by the gamma and epsilon chains, while a peripheral stalk is formed by the delta and b chains.

The protein localises to the cell inner membrane. Its function is as follows. F(1)F(0) ATP synthase produces ATP from ADP in the presence of a proton or sodium gradient. F-type ATPases consist of two structural domains, F(1) containing the extramembraneous catalytic core and F(0) containing the membrane proton channel, linked together by a central stalk and a peripheral stalk. During catalysis, ATP synthesis in the catalytic domain of F(1) is coupled via a rotary mechanism of the central stalk subunits to proton translocation. Component of the F(0) channel, it forms part of the peripheral stalk, linking F(1) to F(0). This chain is ATP synthase subunit b, found in Shewanella frigidimarina (strain NCIMB 400).